An 880-amino-acid chain; its full sequence is Tyrosine-protein kinase receptor TYRO3 (880 aa).

The signal sequence occupies residues M1 to A30. Ig-like C2-type domains are found at residues A31–S118 and P129–R210. At A31–W419 the chain is on the extracellular side. N-linked (GlcNAc...) asparagine glycans are attached at residues N53, N75, N181, N220, N230, N283, N356, and N370. 2 disulfides stabilise this stretch: C54–C107 and C150–C193. Fibronectin type-III domains lie at A217–L310 and A315–H406. The chain crosses the membrane as a helical span at residues V420–L440. The Cytoplasmic segment spans residues L441 to C880. S456 is modified (phosphoserine). Residues F508–V785 enclose the Protein kinase domain. Residues L514 to V522 and K540 each bind ATP. D645 functions as the Proton acceptor in the catalytic mechanism. Y671, Y675, Y676, and Y794 each carry phosphotyrosine; by autocatalysis. Disordered regions lie at residues A804–M827 and S842–N864. A phosphoserine mark is found at S808 and S859. Positions Q852–N864 are enriched in polar residues.

Belongs to the protein kinase superfamily. Tyr protein kinase family. AXL/UFO subfamily. Monomer and homodimer. Interacts (via N-terminus) with extracellular ligands TULP1 and GAS6. Interacts with PIK3R1; this interaction increases PI3-kinase activity. In terms of processing, autophosphorylated. Abundant in the brain and lower levels in other tissues.

Its subcellular location is the cell membrane. It carries out the reaction L-tyrosyl-[protein] + ATP = O-phospho-L-tyrosyl-[protein] + ADP + H(+). Functionally, receptor tyrosine kinase that transduces signals from the extracellular matrix into the cytoplasm by binding to several ligands including TULP1 or GAS6. Regulates many physiological processes including cell survival, migration and differentiation. Ligand binding at the cell surface induces dimerization and autophosphorylation of TYRO3 on its intracellular domain that provides docking sites for downstream signaling molecules. Following activation by ligand, interacts with PIK3R1 and thereby enhances PI3-kinase activity. Activates the AKT survival pathway, including nuclear translocation of NF-kappa-B and up-regulation of transcription of NF-kappa-B-regulated genes. TYRO3 signaling plays a role in various processes such as neuron protection from excitotoxic injury, platelet aggregation and cytoskeleton reorganization. Also plays an important role in inhibition of Toll-like receptors (TLRs)-mediated innate immune response by activating STAT1, which selectively induces production of suppressors of cytokine signaling SOCS1 and SOCS3. This chain is Tyrosine-protein kinase receptor TYRO3 (Tyro3), found in Rattus norvegicus (Rat).